A 574-amino-acid chain; its full sequence is Sulfate adenylyltransferase (574 aa).

The tract at residues 1-169 (MANTPHGGVL…IEAVNKLNHY (169 aa)) is N-terminal. Positions 170 to 394 (DYVALRYTPA…LRESNPPRAS (225 aa)) are catalytic. A sulfate-binding site is contributed by glutamine 197. ATP contacts are provided by residues 197–200 (QTRN) and 291–294 (GRDH). Residues threonine 198, arginine 199, and asparagine 200 contribute to the active site. Sulfate is bound at residue arginine 199. Alanine 295 contributes to the sulfate binding site. Valine 333 lines the ATP pocket. Positions 395-574 (QGFTIFLTGY…LESEGYFERL (180 aa)) are allosteric regulation domain; adenylyl-sulfate kinase-like. 3'-phosphoadenylyl sulfate contacts are provided by residues 434–437 (DTVR), arginine 451, 477–478 (IA), and arginine 516.

This sequence in the N-terminal section; belongs to the sulfate adenylyltransferase family. It in the C-terminal section; belongs to the APS kinase family. As to quaternary structure, homohexamer. Dimer of trimers.

Its subcellular location is the cytoplasm. It catalyses the reaction sulfate + ATP + H(+) = adenosine 5'-phosphosulfate + diphosphate. The protein operates within sulfur metabolism; hydrogen sulfide biosynthesis; sulfite from sulfate: step 1/3. Its activity is regulated as follows. Allosterically inhibited by 3'-phosphoadenosine 5'-phosphosulfate (PAPS). Its function is as follows. Catalyzes the first intracellular reaction of sulfate assimilation, forming adenosine-5'-phosphosulfate (APS) from inorganic sulfate and ATP. Plays an important role in sulfate activation as a component of the biosynthesis pathway of sulfur-containing amino acids. In Aspergillus niger, this protein is Sulfate adenylyltransferase.